Reading from the N-terminus, the 128-residue chain is MAYVKERIYESMFIIAPNVPEEERENLVERVKKIIEERVKGKIDKVERMGMRKFAYEIKKFNEGDYTVIYFRCDGQNLQELENFYRVTPEIIRWQTFRRFDLEKKERKAQREKAAAEATESSEGGSED.

The protein belongs to the bacterial ribosomal protein bS6 family.

In terms of biological role, binds together with bS18 to 16S ribosomal RNA. The protein is Small ribosomal subunit protein bS6 (rpsF) of Thermotoga maritima (strain ATCC 43589 / DSM 3109 / JCM 10099 / NBRC 100826 / MSB8).